The following is a 149-amino-acid chain: Calmodulin (149 aa).

4 EF-hand domains span residues Glu8–Asn43, Pro44–Asp79, Asp81–Lys116, and Leu117–Lys149. 14 residues coordinate Ca(2+): Asp21, Asp23, Asp25, Thr27, Glu32, Asp57, Asp59, Ser61, Thr63, Glu68, Asp94, Asp96, Asn98, and Glu105. Lys116 carries the N6,N6,N6-trimethyllysine modification. Ca(2+)-binding residues include Asp130, Asp132, Asp134, Gln136, and Glu141.

This sequence belongs to the calmodulin family.

Functionally, calmodulin mediates the control of a large number of enzymes, ion channels and other proteins by Ca(2+). Among the enzymes to be stimulated by the calmodulin-Ca(2+) complex are a number of protein kinases and phosphatases. The polypeptide is Calmodulin (Trypanosoma brucei brucei).